We begin with the raw amino-acid sequence, 169 residues long: Neudesin (169 aa).

Positions 1-28 (MAGPAPGRRLVALALIVALAVGLPTAGA) are cleaved as a signal peptide. Positions 41–126 (VRLFTEEELA…EELESLDDVF (86 aa)) constitute a Cytochrome b5 heme-binding domain. The residue at position 133 (K133) is an N6-acetyllysine. Residues 148-169 (DGSPNLDFKPEDQPHFDIKDEF) are disordered. Over residues 155–169 (FKPEDQPHFDIKDEF) the composition is skewed to basic and acidic residues.

Belongs to the cytochrome b5 family. MAPR subfamily. In terms of assembly, interacts with PINK1 and PARK7.

It is found in the secreted. The protein resides in the extracellular space. It localises to the mitochondrion. The protein localises to the endoplasmic reticulum. Functionally, acts as a neurotrophic factor in postnatal mature neurons enhancing neuronal survival. Promotes cell proliferation and neurogenesis in undifferentiated neural progenitor cells at the embryonic stage and inhibits differentiation of astrocytes. Its neurotrophic activity is exerted via MAPK1/ERK2, MAPK3/ERK1 and AKT1/AKT pathways. Neurotrophic activity is enhanced by binding to heme. Also acts as an anorexigenic neurotrophic factor that contributes to energy balance. This is Neudesin (NENF) from Bos taurus (Bovine).